The sequence spans 551 residues: Solute carrier family 22 member 3 (551 aa).

The chain crosses the membrane as a helical span at residues 21 to 41 (VFLLLCLTGVTFAFLFVGVVF). N-linked (GlcNAc...) asparagine glycans are attached at residues Asn72, Asn99, and Asn114. The chain crosses the membrane as a helical span at residues 177–197 (LIVYLISCFGVGITGVVVAFA). Asn199 carries N-linked (GlcNAc...) asparagine glycosylation. The next 2 helical transmembrane spans lie at 236–256 (IVGIVIQMFFTLGIIILPGIA) and 264–284 (GIQLAISLPSFLFLLYYWVVP). Residues 284-288 (PESPR) carry the Proline-rich sequence motif. N-linked (GlcNAc...) asparagine glycosylation occurs at Asn317. 3 consecutive transmembrane segments (helical) span residues 376 to 396 (MDFFISGLVELPGALLILLTI), 463 to 483 (FGVSLCSGLCDFGGIIAPFLL), and 493 to 513 (LPLIIFGILASVCGGLVMLLP).

It belongs to the major facilitator (TC 2.A.1) superfamily. Organic cation transporter (TC 2.A.1.19) family. Highly expressed in placenta. Expressed in intestine, hear, kidney and lung. Widely expressed in brain, particularly in hippocampus, cerebellum, cerebral cortex. In the brain, expressed predominantly in regions located at the brain-cerebrospinal fluid border, with expression extending to regions that belong to monoaminergic pathways such as raphe nuclei, striatum and thalamus. In brain, expressed in neurons and glial cells of amygdala. Expression is low in kidney and lung and undetectable in liver. Expressed in Sertoli cells in testis. Expressed in tracheal and bronchial epithelium of the respiratory tract, where it localizes to the apical membrane of ciliated and brush cells, and in basal cells.

The protein localises to the cell membrane. It localises to the apical cell membrane. It is found in the basolateral cell membrane. The protein resides in the mitochondrion membrane. Its subcellular location is the endomembrane system. The protein localises to the nucleus membrane. It localises to the nucleus outer membrane. It catalyses the reaction (R)-noradrenaline(out) = (R)-noradrenaline(in). The enzyme catalyses (R)-adrenaline(out) = (R)-adrenaline(in). It carries out the reaction serotonin(out) = serotonin(in). The catalysed reaction is dopamine(out) = dopamine(in). It catalyses the reaction histamine(out) = histamine(in). The enzyme catalyses tyramine(in) = tyramine(out). It carries out the reaction guanidine(out) = guanidine(in). The catalysed reaction is agmatine(out) = agmatine(in). It catalyses the reaction spermidine(in) = spermidine(out). The enzyme catalyses L-histidyl-L-proline diketopiperazine(in) = L-histidyl-L-proline diketopiperazine(out). It carries out the reaction (R)-salsolinol(in) = (R)-salsolinol(out). Functionally, electrogenic voltage-dependent transporter that mediates the transport of a variety of organic cations such as endogenous bioactive amines, cationic drugs and xenobiotics. Cation cellular uptake or release is driven by the electrochemical potential, i.e. membrane potential and concentration gradient. Functions as a Na(+)- and Cl(-)-independent, bidirectional uniporter. Implicated in neuronal monoamine neurotransmitters cellular uptake such as dopamine, adrenaline/epinephrine, noradrenaline/norepinephrine, histamine, serotonin and tyramine, thereby supporting a role in homeostatic regulation of aminergic neurotransmission in the brain. Transports dopaminergic neuromodulators cyclo(his-pro) and salsolinol with low efficiency. May be involved in the uptake and disposition of cationic compounds by renal clearance from the blood flow. May contribute to regulate the transport of cationic compounds in testis across the blood-testis-barrier. Mediates the transport of polyamine spermidine and putrescine. Mediates the bidirectional transport of polyamine agmatine. Also transports guanidine. May also mediate intracellular transport of organic cations, thereby playing a role in amine metabolism and intracellular signaling. The sequence is that of Solute carrier family 22 member 3 from Rattus norvegicus (Rat).